We begin with the raw amino-acid sequence, 449 residues long: Phosphoglucosamine mutase (449 aa).

Ser104 (phosphoserine intermediate) is an active-site residue. Residues Ser104, Asp243, Asp245, and Asp247 each contribute to the Mg(2+) site. Ser104 is subject to Phosphoserine.

Belongs to the phosphohexose mutase family. It depends on Mg(2+) as a cofactor. In terms of processing, activated by phosphorylation.

The enzyme catalyses alpha-D-glucosamine 1-phosphate = D-glucosamine 6-phosphate. Functionally, catalyzes the conversion of glucosamine-6-phosphate to glucosamine-1-phosphate. This Xanthomonas oryzae pv. oryzae (strain PXO99A) protein is Phosphoglucosamine mutase.